The sequence spans 117 residues: Large ribosomal subunit protein uL23 (117 aa).

This sequence belongs to the universal ribosomal protein uL23 family. As to quaternary structure, part of the 50S ribosomal subunit. Contacts protein L29, and trigger factor when it is bound to the ribosome.

Its function is as follows. One of the early assembly proteins it binds 23S rRNA. One of the proteins that surrounds the polypeptide exit tunnel on the outside of the ribosome. Forms the main docking site for trigger factor binding to the ribosome. The sequence is that of Large ribosomal subunit protein uL23 from Acetivibrio thermocellus (strain ATCC 27405 / DSM 1237 / JCM 9322 / NBRC 103400 / NCIMB 10682 / NRRL B-4536 / VPI 7372) (Clostridium thermocellum).